The sequence spans 248 residues: 3-deoxy-manno-octulosonate cytidylyltransferase (248 aa).

It belongs to the KdsB family.

It localises to the cytoplasm. The enzyme catalyses 3-deoxy-alpha-D-manno-oct-2-ulosonate + CTP = CMP-3-deoxy-beta-D-manno-octulosonate + diphosphate. Its pathway is nucleotide-sugar biosynthesis; CMP-3-deoxy-D-manno-octulosonate biosynthesis; CMP-3-deoxy-D-manno-octulosonate from 3-deoxy-D-manno-octulosonate and CTP: step 1/1. It functions in the pathway bacterial outer membrane biogenesis; lipopolysaccharide biosynthesis. Its function is as follows. Activates KDO (a required 8-carbon sugar) for incorporation into bacterial lipopolysaccharide in Gram-negative bacteria. In Shigella flexneri, this protein is 3-deoxy-manno-octulosonate cytidylyltransferase.